The primary structure comprises 608 residues: Actin-interacting protein 1 (608 aa).

WD repeat units lie at residues 62 to 101 (EHSC…HLLK), 106 to 149 (PIAG…GEIS), 150 to 190 (GQSK…FKMT), 193 to 232 (DHSR…LVGE), 237 to 276 (AHKG…LVSE), 323 to 362 (GHNK…NDRI), 366 to 403 (GHGN…YTDY), 444 to 483 (PIKY…LEPK), 487 to 526 (DHLG…PAHN), 531 to 570 (FHSA…KHTI), and 575 to 607 (HPQS…HVEN).

This sequence belongs to the WD repeat AIP1 family. As to expression, expressed in pupal wing cells.

The protein resides in the cytoplasm. It localises to the cytoskeleton. Functionally, induces disassembly of actin filaments in conjunction with ADF/cofilin family proteins. Together with GMF, promotes Arp2/3-nucleated actin filament array disassembly. Essential for organismal and cell viability. Required for the development of normal wing cell planar polarity. In egg chambers and together with GMF, plays an important role in directional migration of border cell clusters. This Drosophila melanogaster (Fruit fly) protein is Actin-interacting protein 1 (flr).